Reading from the N-terminus, the 95-residue chain is Aspartyl/glutamyl-tRNA(Asn/Gln) amidotransferase subunit C (95 aa).

It belongs to the GatC family. As to quaternary structure, heterotrimer of A, B and C subunits.

It carries out the reaction L-glutamyl-tRNA(Gln) + L-glutamine + ATP + H2O = L-glutaminyl-tRNA(Gln) + L-glutamate + ADP + phosphate + H(+). The catalysed reaction is L-aspartyl-tRNA(Asn) + L-glutamine + ATP + H2O = L-asparaginyl-tRNA(Asn) + L-glutamate + ADP + phosphate + 2 H(+). Functionally, allows the formation of correctly charged Asn-tRNA(Asn) or Gln-tRNA(Gln) through the transamidation of misacylated Asp-tRNA(Asn) or Glu-tRNA(Gln) in organisms which lack either or both of asparaginyl-tRNA or glutaminyl-tRNA synthetases. The reaction takes place in the presence of glutamine and ATP through an activated phospho-Asp-tRNA(Asn) or phospho-Glu-tRNA(Gln). This chain is Aspartyl/glutamyl-tRNA(Asn/Gln) amidotransferase subunit C, found in Chlorobium luteolum (strain DSM 273 / BCRC 81028 / 2530) (Pelodictyon luteolum).